A 680-amino-acid chain; its full sequence is DNA-directed RNA polymerase subunit beta' (680 aa).

Zn(2+) contacts are provided by Cys-69, Cys-71, Cys-87, and Cys-90. Residues Asp-489, Asp-491, and Asp-493 each contribute to the Mg(2+) site.

The protein belongs to the RNA polymerase beta' chain family. RpoC1 subfamily. In plastids the minimal PEP RNA polymerase catalytic core is composed of four subunits: alpha, beta, beta', and beta''. When a (nuclear-encoded) sigma factor is associated with the core the holoenzyme is formed, which can initiate transcription. It depends on Mg(2+) as a cofactor. Zn(2+) serves as cofactor.

The protein resides in the plastid. The protein localises to the chloroplast. It catalyses the reaction RNA(n) + a ribonucleoside 5'-triphosphate = RNA(n+1) + diphosphate. Its function is as follows. DNA-dependent RNA polymerase catalyzes the transcription of DNA into RNA using the four ribonucleoside triphosphates as substrates. The protein is DNA-directed RNA polymerase subunit beta' of Draba nemorosa (Woodland whitlowgrass).